A 134-amino-acid chain; its full sequence is Methylglyoxal synthase (134 aa).

The MGS-like domain occupies 1–134 (MHIALIAHDE…DWRDLRRNDE (134 aa)). Substrate contacts are provided by residues His-8, Lys-12, 34–37 (TGTT), and 54–55 (SG). The active-site Proton donor/acceptor is the Asp-60. His-87 contributes to the substrate binding site.

This sequence belongs to the methylglyoxal synthase family.

It carries out the reaction dihydroxyacetone phosphate = methylglyoxal + phosphate. Functionally, catalyzes the formation of methylglyoxal from dihydroxyacetone phosphate. The protein is Methylglyoxal synthase of Listeria monocytogenes serotype 4b (strain CLIP80459).